The following is a 399-amino-acid chain: Succinyl-diaminopimelate desuccinylase (399 aa).

Residue His80 participates in Zn(2+) binding. The active site involves Asp82. Asp113 is a binding site for Zn(2+). Glu147 acts as the Proton acceptor in catalysis. Zn(2+) contacts are provided by Glu148, Glu176, and His366.

This sequence belongs to the peptidase M20A family. DapE subfamily. As to quaternary structure, homodimer. Requires Zn(2+) as cofactor. Co(2+) is required as a cofactor.

It catalyses the reaction N-succinyl-(2S,6S)-2,6-diaminopimelate + H2O = (2S,6S)-2,6-diaminopimelate + succinate. The protein operates within amino-acid biosynthesis; L-lysine biosynthesis via DAP pathway; LL-2,6-diaminopimelate from (S)-tetrahydrodipicolinate (succinylase route): step 3/3. Its function is as follows. Catalyzes the hydrolysis of N-succinyl-L,L-diaminopimelic acid (SDAP), forming succinate and LL-2,6-diaminopimelate (DAP), an intermediate involved in the bacterial biosynthesis of lysine and meso-diaminopimelic acid, an essential component of bacterial cell walls. The protein is Succinyl-diaminopimelate desuccinylase of Colwellia psychrerythraea (strain 34H / ATCC BAA-681) (Vibrio psychroerythus).